The chain runs to 182 residues: Flavin prenyltransferase UbiX (182 aa).

FMN contacts are provided by residues 9–11, S35, 86–89, and R121; these read GAS and SIKT. Dimethylallyl phosphate-binding residues include Y151 and R167.

It belongs to the UbiX/PAD1 family.

The enzyme catalyses dimethylallyl phosphate + FMNH2 = prenylated FMNH2 + phosphate. In terms of biological role, flavin prenyltransferase that catalyzes the synthesis of the prenylated FMN cofactor (prenyl-FMN) for 4-hydroxy-3-polyprenylbenzoic acid decarboxylase UbiD. The prenyltransferase is metal-independent and links a dimethylallyl moiety from dimethylallyl monophosphate (DMAP) to the flavin N5 and C6 atoms of FMN. The sequence is that of Flavin prenyltransferase UbiX from Archaeoglobus fulgidus (strain ATCC 49558 / DSM 4304 / JCM 9628 / NBRC 100126 / VC-16).